Here is a 333-residue protein sequence, read N- to C-terminus: UDP-N-acetylenolpyruvoylglucosamine reductase (333 aa).

Residues 12–176 (LPAQCRALIE…TSVVFRLPKD (165 aa)) form the FAD-binding PCMH-type domain. Arg153 is an active-site residue. Ser221 (proton donor) is an active-site residue. Glu317 is a catalytic residue.

The protein belongs to the MurB family. It depends on FAD as a cofactor.

It is found in the cytoplasm. It catalyses the reaction UDP-N-acetyl-alpha-D-muramate + NADP(+) = UDP-N-acetyl-3-O-(1-carboxyvinyl)-alpha-D-glucosamine + NADPH + H(+). The protein operates within cell wall biogenesis; peptidoglycan biosynthesis. In terms of biological role, cell wall formation. The protein is UDP-N-acetylenolpyruvoylglucosamine reductase of Idiomarina loihiensis (strain ATCC BAA-735 / DSM 15497 / L2-TR).